Here is a 145-residue protein sequence, read N- to C-terminus: Protein FAM216B (145 aa).

The tract at residues Thr92–Pro121 is disordered.

Belongs to the FAM216 family.

The chain is Protein FAM216B (FAM216B) from Bos taurus (Bovine).